Consider the following 107-residue polypeptide: MDQFQHISVVDAQEKLQQQDLNAVLVDIRDPQSFIRGHVENAFHLTNDTIVELMNEVDFEQPVLVMCYHGHSSQGAAQYLVNQGYEEVYSVDGGFEGWHKAGLPVEK.

Positions 19 to 107 (QDLNAVLVDI…WHKAGLPVEK (89 aa)) constitute a Rhodanese domain. The Cysteine persulfide intermediate role is filled by cysteine 67.

Belongs to the GlpE family.

It is found in the cytoplasm. The catalysed reaction is thiosulfate + hydrogen cyanide = thiocyanate + sulfite + 2 H(+). The enzyme catalyses thiosulfate + [thioredoxin]-dithiol = [thioredoxin]-disulfide + hydrogen sulfide + sulfite + 2 H(+). Its function is as follows. Transferase that catalyzes the transfer of sulfur from thiosulfate to thiophilic acceptors such as cyanide or dithiols. May function in a CysM-independent thiosulfate assimilation pathway by catalyzing the conversion of thiosulfate to sulfite, which can then be used for L-cysteine biosynthesis. The sequence is that of Thiosulfate sulfurtransferase GlpE from Aliivibrio fischeri (strain ATCC 700601 / ES114) (Vibrio fischeri).